The primary structure comprises 600 residues: NADH-quinone oxidoreductase subunit C/D (600 aa).

Residues 1-190 (MVNNMTDLTA…DPFELTKAKQ (190 aa)) form an NADH dehydrogenase I subunit C region. Residues 214–600 (DFMFLNLGPN…IDFVMSDVDR (387 aa)) form an NADH dehydrogenase I subunit D region.

This sequence in the N-terminal section; belongs to the complex I 30 kDa subunit family. The protein in the C-terminal section; belongs to the complex I 49 kDa subunit family. As to quaternary structure, NDH-1 is composed of 13 different subunits. Subunits NuoB, CD, E, F, and G constitute the peripheral sector of the complex.

It is found in the cell inner membrane. The enzyme catalyses a quinone + NADH + 5 H(+)(in) = a quinol + NAD(+) + 4 H(+)(out). Functionally, NDH-1 shuttles electrons from NADH, via FMN and iron-sulfur (Fe-S) centers, to quinones in the respiratory chain. The immediate electron acceptor for the enzyme in this species is believed to be ubiquinone. Couples the redox reaction to proton translocation (for every two electrons transferred, four hydrogen ions are translocated across the cytoplasmic membrane), and thus conserves the redox energy in a proton gradient. This chain is NADH-quinone oxidoreductase subunit C/D, found in Salmonella arizonae (strain ATCC BAA-731 / CDC346-86 / RSK2980).